The sequence spans 307 residues: Ribulose bisphosphate carboxylase/oxygenase activase, chloroplastic (307 aa).

Residues 1–46 constitute a chloroplast transit peptide; sequence MSIPDDKEAGTIDEFLQKEGVLDILQKLDHDLVGLKPVKDRVREIA. An ATP-binding site is contributed by 73–80; it reads GSPGTGKT.

This sequence belongs to the CbxX/CfxQ family. Forms homooligomers. Forms heterohexameric rings with the plastid-encoded Rca subunit consisting of 3 of each nuclear- and plastidial-encoded subunits that alternate in the ring.

It localises to the plastid. The protein localises to the chloroplast. Required for the expression of ribulose 1,5-bisphosphate carboxylase/oxygenase (RuBisCo). ATPase involved in the activation of red-type RuBisCo, which tends to form inactive complexes with its substrate ribulose 1,5-bisphosphate (RuBP). Catalyzes the release of RuBP from inhibited RuBisCo in an ATP-dependent manner. Activation of RuBisCO involves the ATP-dependent carboxylation of the epsilon-amino group of lysine leading to a carbamate structure. The nuclear-encoded subunit plays a more critical role in activase function than the plastidial-encoded subunit. The chain is Ribulose bisphosphate carboxylase/oxygenase activase, chloroplastic from Cyanidioschyzon merolae (strain NIES-3377 / 10D) (Unicellular red alga).